The following is a 209-amino-acid chain: Probable nicotinate-nucleotide adenylyltransferase (209 aa).

This sequence belongs to the NadD family.

It carries out the reaction nicotinate beta-D-ribonucleotide + ATP + H(+) = deamido-NAD(+) + diphosphate. The protein operates within cofactor biosynthesis; NAD(+) biosynthesis; deamido-NAD(+) from nicotinate D-ribonucleotide: step 1/1. Its function is as follows. Catalyzes the reversible adenylation of nicotinate mononucleotide (NaMN) to nicotinic acid adenine dinucleotide (NaAD). The chain is Probable nicotinate-nucleotide adenylyltransferase from Streptococcus pneumoniae serotype 4 (strain ATCC BAA-334 / TIGR4).